A 38-amino-acid polypeptide reads, in one-letter code: Potassium channel toxin alpha-KTx 3.11 (38 aa).

Cystine bridges form between C8/C28, C14/C33, and C18/C35.

This sequence belongs to the short scorpion toxin superfamily. Potassium channel inhibitor family. Alpha-KTx 03 subfamily. Expressed by the venom gland.

It is found in the secreted. Blocks the voltage-gated potassium channel Kv1.3/KCNA3 (IC(50)=7.2 nM). Correnti and colleagues have also shown that this toxin inhibits Kv1.1/KCNA1, which is different from Abdel-Mottaleb and colleagues conclusions. This is Potassium channel toxin alpha-KTx 3.11 from Odontobuthus doriae (Yellow Iranian scorpion).